A 1009-amino-acid chain; its full sequence is Protein-tyrosine kinase 2-beta (1009 aa).

The FERM domain maps to 39–359; the sequence is RILKVCFYSN…GYCRLQGEHK (321 aa). 3 positions are modified to phosphoserine: serine 361, serine 375, and serine 399. Tyrosine 402 is modified (phosphotyrosine; by autocatalysis). The Protein kinase domain occupies 425–683; it reads VVLNRILGEG…ELVCSLSDIY (259 aa). ATP is bound by residues 431–439, lysine 457, and 503–509; these read LGEGFFGEV and ELYPYGE. Catalysis depends on aspartate 549, which acts as the Proton acceptor. Tyrosine 579 carries the post-translational modification Phosphotyrosine. Phosphotyrosine; by SRC, FYN and LCK is present on tyrosine 580. The tract at residues 696–728 is disordered; it reads NARYRPPKILEPTTFQEPPPKPSRPKYRPPPQT. Pro residues predominate over residues 712–727; the sequence is EPPPKPSRPKYRPPPQ. Tyrosine 722 is subject to Phosphotyrosine. A Phosphoserine modification is found at serine 762. Phosphothreonine is present on threonine 765. The interaction with TGFB1I1 stretch occupies residues 801-1009; it reads KIKMKQVLER…VANLAHPPAE (209 aa). Phosphotyrosine is present on tyrosine 834. At serine 839 the chain carries Phosphoserine. Threonine 842 carries the phosphothreonine modification. Tyrosine 849 carries the post-translational modification Phosphotyrosine. Position 866 is a phosphoserine (serine 866). The segment at 868-1009 is focal adhesion targeting (FAT); that stretch reads QPTANLDRTD…VANLAHPPAE (142 aa). At tyrosine 881 the chain carries Phosphotyrosine.

The protein belongs to the protein kinase superfamily. Tyr protein kinase family. FAK subfamily. Homodimer, or homooligomer. Interacts with KCNA2. Interacts with NPHP1, ASAP1, ASAP2, ARHGAP26, SKAP2 and TGFB1I1. The Tyr-402 phosphorylated form interacts with SRC (via SH2 domain) and SRC family members. Forms a signaling complex with EPHA1, LCK and phosphatidylinositol 3-kinase; upon activation by EFNA1. Interacts with GRB2 (via SH2 domain). Interacts with P53/TP53 and MDM2. Interacts with MYLK. Interacts with BCAR1. Interacts with RB1CC1. Interacts with RHOU. Interacts with VAV1. Interacts with PDPK1. Interacts with DLG4. Interacts with LPXN and PTPN12. Interacts with SIRPA and SH2D3C. Interacts (hypophosphorylated) with PXN. Interacts with ARHGAP10. Phosphorylated on tyrosine residues in response to various stimuli that elevate the intracellular calcium concentration; this activation is indirect and may be mediated by production of reactive oxygen species (ROS). Tyr-402 is the major autophosphorylation site, but other kinases can also phosphorylate Tyr-402. Autophosphorylation occurs in trans, i.e. one subunit of the dimeric receptor phosphorylates tyrosine residues on the other subunit. Phosphorylation at Tyr-402 promotes interaction with SRC and SRC family members, leading to phosphorylation at Tyr-579; Tyr-580 and Tyr-881. Phosphorylation at Tyr-881 is important for interaction with GRB2. Phosphorylated on tyrosine residues upon activation of FGR and PKC. Recruitment by NPHP1 to cell matrix adhesions initiates Tyr-402 phosphorylation. In monocytes, adherence to substrata is required for tyrosine phosphorylation and kinase activation. Angiotensin II, thapsigargin and L-alpha-lysophosphatidic acid (LPA) also induce autophosphorylation and increase kinase activity. Phosphorylation by MYLK promotes ITGB2 activation and is thus essential to trigger neutrophil transmigration during lung injury. Dephosphorylated by PTPN12.

It localises to the cytoplasm. Its subcellular location is the perinuclear region. It is found in the cell membrane. The protein resides in the cell junction. The protein localises to the focal adhesion. It localises to the cell projection. Its subcellular location is the lamellipodium. It is found in the cell cortex. The protein resides in the nucleus. It carries out the reaction L-tyrosyl-[protein] + ATP = O-phospho-L-tyrosyl-[protein] + ADP + H(+). Activated in response to stimuli that lead to increased intracellular Ca(2+) levels; this activation is indirect and may be mediated by calcium-mediated production of reactive oxygen species (ROS). Activated by autophosphorylation at Tyr-402; this creates a binding site for SRC family kinases and leads to phosphorylation at additional tyrosine residues. Phosphorylation at Tyr-402, Tyr-579 and Tyr-580 is required for optimal kinase activity. Functionally, non-receptor protein-tyrosine kinase that regulates reorganization of the actin cytoskeleton, cell polarization, cell migration, adhesion, spreading and bone remodeling. Plays a role in the regulation of the humoral immune response, and is required for normal levels of marginal B-cells in the spleen and normal migration of splenic B-cells. Required for normal macrophage polarization and migration towards sites of inflammation. Regulates cytoskeleton rearrangement and cell spreading in T-cells, and contributes to the regulation of T-cell responses. Promotes osteoclastic bone resorption; this requires both PTK2B/PYK2 and SRC. May inhibit differentiation and activity of osteoprogenitor cells. Functions in signaling downstream of integrin and collagen receptors, immune receptors, G-protein coupled receptors (GPCR), cytokine, chemokine and growth factor receptors, and mediates responses to cellular stress. Forms multisubunit signaling complexes with SRC and SRC family members upon activation; this leads to the phosphorylation of additional tyrosine residues, creating binding sites for scaffold proteins, effectors and substrates. Regulates numerous signaling pathways. Promotes activation of phosphatidylinositol 3-kinase and of the AKT1 signaling cascade. Promotes activation of NOS3. Regulates production of the cellular messenger cGMP. Promotes activation of the MAP kinase signaling cascade, including activation of MAPK1/ERK2, MAPK3/ERK1 and MAPK8/JNK1. Promotes activation of Rho family GTPases, such as RHOA and RAC1. Recruits the ubiquitin ligase MDM2 to P53/TP53 in the nucleus, and thereby regulates P53/TP53 activity, P53/TP53 ubiquitination and proteasomal degradation. Acts as a scaffold, binding to both PDPK1 and SRC, thereby allowing SRC to phosphorylate PDPK1 at 'Tyr-9, 'Tyr-373', and 'Tyr-376'. Promotes phosphorylation of NMDA receptors by SRC family members, and thereby contributes to the regulation of NMDA receptor ion channel activity and intracellular Ca(2+) levels. May also regulate potassium ion transport by phosphorylation of potassium channel subunits. Phosphorylates SRC; this increases SRC kinase activity. Phosphorylates ASAP1, NPHP1, KCNA2 and SHC1. Promotes phosphorylation of ASAP2, RHOU and PXN; this requires both SRC and PTK2/PYK2. The polypeptide is Protein-tyrosine kinase 2-beta (Ptk2b) (Mus musculus (Mouse)).